Consider the following 299-residue polypeptide: 33 kDa chaperonin (299 aa).

2 disulfide bridges follow: Cys-240-Cys-242 and Cys-273-Cys-276.

It belongs to the HSP33 family. In terms of processing, under oxidizing conditions two disulfide bonds are formed involving the reactive cysteines. Under reducing conditions zinc is bound to the reactive cysteines and the protein is inactive.

Its subcellular location is the cytoplasm. Redox regulated molecular chaperone. Protects both thermally unfolding and oxidatively damaged proteins from irreversible aggregation. Plays an important role in the bacterial defense system toward oxidative stress. This Gloeothece citriformis (strain PCC 7424) (Cyanothece sp. (strain PCC 7424)) protein is 33 kDa chaperonin.